The sequence spans 59 residues: U-reduvitoxin-Pr6a (59 aa).

The first 19 residues, 1–19 (MKVFLLTILLCFLIAYCAG), serve as a signal peptide directing secretion. 3 disulfide bridges follow: cysteine 31-cysteine 46, cysteine 38-cysteine 51, and cysteine 45-cysteine 58.

The protein belongs to the venom Ptu1-like knottin family. In terms of tissue distribution, expressed by the venom gland.

Its subcellular location is the secreted. Binds reversibly and blocks P/Q-type voltage-gated calcium channels (Cav). The sequence is that of U-reduvitoxin-Pr6a from Platymeris rhadamanthus (Red spot assassin bug).